The primary structure comprises 557 residues: Protein NRT1/ PTR FAMILY 2.6 (557 aa).

The next 12 helical transmembrane spans lie at 26 to 46 (ITFPFMIVTLFGLTLATLGWL), 67 to 87 (ILNIFSGFTFMFPAIGAIAAD), 89 to 109 (FFGTIPVILVSSFISLVGVVL), 136 to 156 (NIQLGVLYTAITLGCVGAGGL), 177 to 197 (FFNWFFFTWYLAASISATAIV), 203 to 223 (ISWSFGFGLCVAANLLGLIVF), 318 to 338 (IIPLVLAILFLSTPIAMQLGL), 356 to 376 (IPAGSLQVITLLSTCLFIIVN), 398 to 418 (VGIGHVFNILSMAVTAIVEAK), 439 to 459 (VLWLFPPLVIVGIGEAFHFPG), 478 to 498 (SITSVLIGICFYTSTALIDLI), and 518 to 538 (YWILVIGGVLNLGYFLVCSWF).

It belongs to the major facilitator superfamily. Proton-dependent oligopeptide transporter (POT/PTR) (TC 2.A.17) family. As to expression, expressed in roots.

It localises to the membrane. In terms of biological role, transporter involved in a passive nitrate efflux. The chain is Protein NRT1/ PTR FAMILY 2.6 (NPF2.6) from Arabidopsis thaliana (Mouse-ear cress).